Here is a 599-residue protein sequence, read N- to C-terminus: Fructan 1-exohydrolase (599 aa).

An N-terminal signal peptide occupies residues 1–16 (MAQAWAFLLLPALALA). Aspartate 78 is a catalytic residue. 3 N-linked (GlcNAc...) asparagine glycosylation sites follow: asparagine 171, asparagine 239, and asparagine 251. A disulfide bridge links cysteine 449 with cysteine 495.

The protein belongs to the glycosyl hydrolase 32 family.

It catalyses the reaction Hydrolysis of terminal, non-reducing (2-&gt;1)-linked beta-D-fructofuranose residues in fructans.. Inhibited by sucrose. Hydrolyzes inulin-type beta-(2,1)-fructans. May play a role as a beta-(2,1)-trimmer during graminan biosynthesis. This Hordeum vulgare (Barley) protein is Fructan 1-exohydrolase.